We begin with the raw amino-acid sequence, 125 residues long: Synaptobrevin (125 aa).

Positions 1–46 are disordered; the sequence is MSGPQNPQAGPGGPPSGPPQPGGPPGPPQGPPQPVQQSKRLQQTQA. The Cytoplasmic segment spans residues 1–103; sequence MSGPQNPQAG…KRKFWWKNCK (103 aa). The span at 12–34 shows a compositional bias: pro residues; sequence GGPPSGPPQPGGPPGPPQGPPQP. The v-SNARE coiled-coil homology domain maps to 40–100; the sequence is RLQQTQAQVE…GKLKRKFWWK (61 aa). The chain crosses the membrane as a helical; Anchor for type IV membrane protein span at residues 104–123; sequence MMIILGGIVAVIVTVIIVWA. Topologically, residues 124–125 are vesicular; the sequence is AT.

This sequence belongs to the synaptobrevin family.

Its subcellular location is the cytoplasmic vesicle. It localises to the secretory vesicle. It is found in the synaptic vesicle membrane. The protein localises to the synapse. The protein resides in the synaptosome. Its function is as follows. Intrinsic membrane protein of small synaptic vesicles. This chain is Synaptobrevin, found in Doryteuthis pealeii (Longfin inshore squid).